We begin with the raw amino-acid sequence, 603 residues long: UvrABC system protein C (603 aa).

Positions threonine 17–valine 94 constitute a GIY-YIG domain. Positions serine 199 to isoleucine 234 constitute a UVR domain.

This sequence belongs to the UvrC family. Interacts with UvrB in an incision complex.

The protein localises to the cytoplasm. Its function is as follows. The UvrABC repair system catalyzes the recognition and processing of DNA lesions. UvrC both incises the 5' and 3' sides of the lesion. The N-terminal half is responsible for the 3' incision and the C-terminal half is responsible for the 5' incision. This is UvrABC system protein C from Borrelia garinii subsp. bavariensis (strain ATCC BAA-2496 / DSM 23469 / PBi) (Borreliella bavariensis).